We begin with the raw amino-acid sequence, 186 residues long: Testis-expressed protein 29 (186 aa).

At 1 to 56 (MKDTKEIKRSPPHLLKKFAVCDIPLYDICDYNVTRERCRSLDCCFYRGVCYEKAVP) the chain is on the extracellular side. Residues 57–77 (IYVQVFFTLIWFVAGAFIIAV) form a helical membrane-spanning segment. Over 78-151 (IYRVIQGTKK…AGCCLWMKSK (74 aa)) the chain is Cytoplasmic. 2 disordered regions span residues 104-138 (SPTP…KTES) and 151-186 (KPAK…QAAP). The span at 108–133 (ELIPEPIPEPIPEPIPEPIREPPPPV) shows a compositional bias: pro residues.

It is found in the membrane. This Mus musculus (Mouse) protein is Testis-expressed protein 29 (Tex29).